Consider the following 782-residue polypeptide: cGMP-specific 3',5'-cyclic phosphodiesterase gamma (782 aa).

At 1–69 (MKHMFKNILF…LCDNMYSKKY (69 aa)) the chain is on the cytoplasmic side. The helical transmembrane segment at 70 to 90 (VILVSHLISLLLMYSVCLIVG) threads the bilayer. Residues 91–97 (NINDLFS) lie on the Extracellular side of the membrane. The helical transmembrane segment at 98–118 (VLKLTYILLHTFTAINIILIL) threads the bilayer. Residues 119 to 135 (TLHATHYVEMFKSIKGE) lie on the Cytoplasmic side of the membrane. The chain crosses the membrane as a helical span at residues 136-156 (IFIFYIMMIFVIWCSWLFILF). Residues 157–181 (NNIKDLLPIVVNVNNFLYATYANNK) lie on the Extracellular side of the membrane. A helical membrane pass occupies residues 182-202 (INIVLGFFAYLPIFYLITIIP). Residues 203 to 208 (CRICYS) are Cytoplasmic-facing. Residues 209-229 (CAFDILFFIMKVAIFSVYYLI) form a helical membrane-spanning segment. Residues 230-239 (TMKSYILTDN) are Extracellular-facing. Residues 240–260 (IFMIISALVGSLFIFVIRYII) form a helical membrane-spanning segment. Topologically, residues 261–782 (EIQRRLSFHN…YAPNLNIYKL (522 aa)) are cytoplasmic. Residues 376-396 (GSKEEPEAESESECVDESKEG) form a disordered region. Positions 381–390 (PEAESESECV) are enriched in acidic residues. One can recognise a PDEase domain in the interval 423–751 (YEEKENEILK…SKWTKIEKDE (329 aa)). The active-site Proton donor is the His-504. 504 to 508 (HNSIH) contacts a nucleoside 3',5'-cyclic phosphate. A divalent metal cation-binding residues include His-508, His-544, Asp-545, and Asp-654. Positions 545, 654, and 706 each coordinate a nucleoside 3',5'-cyclic phosphate.

It belongs to the cyclic nucleotide phosphodiesterase family. A divalent metal cation serves as cofactor.

The protein localises to the membrane. The protein resides in the endoplasmic reticulum membrane. The catalysed reaction is 3',5'-cyclic GMP + H2O = GMP + H(+). It participates in purine metabolism; 3',5'-cyclic GMP degradation; GMP from 3',5'-cyclic GMP: step 1/1. Functionally, specifically hydrolyzes the second messenger cGMP, which is a key regulator of many important physiological processes. Probably by regulating cGMP levels, required for sporozoite motility and invasion of the mosquito salivary glands. This chain is cGMP-specific 3',5'-cyclic phosphodiesterase gamma, found in Plasmodium yoelii.